Consider the following 2155-residue polypeptide: Polyketide synthase 2 (2155 aa).

Positions 7 to 244 (FIFGDQTGGF…IPIPIWAPYH (238 aa)) are N-terminal acylcarrier protein transacylase domain (SAT). Residues 374–807 (DSKIAIIGMS…GGNSALLLED (434 aa)) enclose the Ketosynthase family 3 (KS3) domain. Active-site for beta-ketoacyl synthase activity residues include Cys546, His681, and His723. Residues 908–1213 (GFVFSGQGAQ…ASLHRKDDGW (306 aa)) are malonyl-CoA:ACP transacylase (MAT) domain. Ser998 serves as the catalytic For acyl/malonyl transferase activity. Residues 1290 to 1605 (TSSVQRIIRQ…RSLLNKVLPP (316 aa)) are product template (PT) domain. The segment at 1294-1428 (QRIIRQTDGP…CLLRFADPTS (135 aa)) is N-terminal hotdog fold. The PKS/mFAS DH domain occupies 1294–1600 (QRIIRQTDGP…FLGMSRSLLN (307 aa)). His1327 serves as the catalytic Proton acceptor; for dehydratase activity. Positions 1455–1600 (TDSLLSKGIV…FLGMSRSLLN (146 aa)) are C-terminal hotdog fold. Residue Asp1514 is the Proton donor; for dehydratase activity of the active site. A disordered region spans residues 1626–1654 (AASAKDTERRPLDIPTRAQRQPSSPQTGT). The span at 1643-1654 (AQRQPSSPQTGT) shows a compositional bias: polar residues. Positions 1649–1726 (SPQTGTMGRI…ELKAFLGADQ (78 aa)) constitute a Carrier 1 domain. Position 1686 is an O-(pantetheine 4'-phosphoryl)serine (Ser1686). The disordered stretch occupies residues 1735–1765 (SSIGQHTPQTSDKGSGTLASQKTDGDTGPDT). The segment covering 1736-1756 (SIGQHTPQTSDKGSGTLASQK) has biased composition (polar residues). Residues 1764–1838 (DTTLNRVCAI…ALQKALCGSE (75 aa)) enclose the Carrier 2 domain. Ser1798 carries the O-(pantetheine 4'-phosphoryl)serine modification. The segment at 1873 to 2149 (ASPPHATSIL…MVEMGNLIGD (277 aa)) is thioesterase (TE) domain. The active-site For thioesterase activity is the Ser1979.

Its function is as follows. Polyketide synthase; part of the Pks2 gene cluster that mediates the formation of infectious structures (appressoria), enabling these fungi to kill insects faster. The product of the Pks2 gene cluster is different from the one of Pks1 and has still not been identified. This Metarhizium anisopliae (strain ARSEF 549) protein is Polyketide synthase 2.